Here is a 415-residue protein sequence, read N- to C-terminus: Beta-1,4-glucuronyltransferase 1 (415 aa).

At 1-8 (MQMSYAIR) the chain is on the cytoplasmic side. The helical; Signal-anchor for type II membrane protein transmembrane segment at 9–36 (CAFYQLLLAALMLVAMLQLLYLSLLSGL) threads the bilayer. The Lumenal segment spans residues 37–415 (HGQEEQDQYF…AKYPNSPRRC (379 aa)). N-linked (GlcNAc...) asparagine glycosylation is present at Asn204. Mn(2+) is bound by residues Asp227 and Asp229. N-linked (GlcNAc...) asparagine glycosylation is present at Asn300.

Belongs to the glycosyltransferase 49 family. As to quaternary structure, interacts with LARGE1 and LARGE2. The cofactor is Mn(2+).

The protein localises to the golgi apparatus membrane. The enzyme catalyses 3-O-[beta-D-Xyl-(1-&gt;4)-Rib-ol-P-Rib-ol-P-3-beta-D-GalNAc-(1-&gt;3)-beta-D-GlcNAc-(1-&gt;4)-(O-6-P-alpha-D-Man)]-Thr-[protein] + UDP-alpha-D-glucuronate = 3-O-[beta-D-GlcA-(1-&gt;3)-beta-D-Xyl-(1-&gt;4)-Rib-ol-P-Rib-ol-P-3-beta-D-GalNAc-(1-&gt;3)-beta-D-GlcNAc-(1-&gt;4)-(O-6-P-alpha-D-Man)]-Thr-[protein] + UDP + H(+). It functions in the pathway protein modification; protein glycosylation. In terms of biological role, beta-1,4-glucuronyltransferase involved in O-mannosylation of alpha-dystroglycan (DAG1). Transfers a glucuronic acid (GlcA) residue onto a xylose (Xyl) acceptor to produce the glucuronyl-beta-1,4-xylose-beta disaccharide primer, which is further elongated by LARGE1, during synthesis of phosphorylated O-mannosyl glycan. Phosphorylated O-mannosyl glycan is a carbohydrate structure present in alpha-dystroglycan (DAG1), which is required for binding laminin G-like domain-containing extracellular proteins with high affinity. Required for axon guidance; via its function in O-mannosylation of alpha-dystroglycan (DAG1). The polypeptide is Beta-1,4-glucuronyltransferase 1 (Pongo abelii (Sumatran orangutan)).